A 134-amino-acid chain; its full sequence is ATP synthase epsilon chain (134 aa).

This sequence belongs to the ATPase epsilon chain family. As to quaternary structure, F-type ATPases have 2 components, CF(1) - the catalytic core - and CF(0) - the membrane proton channel. CF(1) has five subunits: alpha(3), beta(3), gamma(1), delta(1), epsilon(1). CF(0) has three main subunits: a, b and c.

It localises to the cell membrane. Its function is as follows. Produces ATP from ADP in the presence of a proton gradient across the membrane. This chain is ATP synthase epsilon chain, found in Anoxybacillus flavithermus (strain DSM 21510 / WK1).